The following is a 66-amino-acid chain: Large ribosomal subunit protein bL33 (66 aa).

It belongs to the bacterial ribosomal protein bL33 family.

This is Large ribosomal subunit protein bL33 from Synechococcus sp. (strain CC9902).